A 616-amino-acid chain; its full sequence is Chaperone protein HscA (616 aa).

The protein belongs to the heat shock protein 70 family.

In terms of biological role, chaperone involved in the maturation of iron-sulfur cluster-containing proteins. Has a low intrinsic ATPase activity which is markedly stimulated by HscB. Involved in the maturation of IscU. This Salmonella newport (strain SL254) protein is Chaperone protein HscA.